A 156-amino-acid polypeptide reads, in one-letter code: Small ribosomal subunit protein uS7 (156 aa).

This sequence belongs to the universal ribosomal protein uS7 family. In terms of assembly, part of the 30S ribosomal subunit. Contacts proteins S9 and S11.

Functionally, one of the primary rRNA binding proteins, it binds directly to 16S rRNA where it nucleates assembly of the head domain of the 30S subunit. Is located at the subunit interface close to the decoding center, probably blocks exit of the E-site tRNA. The chain is Small ribosomal subunit protein uS7 from Alcanivorax borkumensis (strain ATCC 700651 / DSM 11573 / NCIMB 13689 / SK2).